The chain runs to 165 residues: Ribosome maturation factor RimM (165 aa).

Residues 90–161 (PDTYYVSDLK…KIIIKPVGEW (72 aa)) form the PRC barrel domain.

Belongs to the RimM family. As to quaternary structure, binds ribosomal protein uS19.

The protein resides in the cytoplasm. Functionally, an accessory protein needed during the final step in the assembly of 30S ribosomal subunit, possibly for assembly of the head region. Essential for efficient processing of 16S rRNA. May be needed both before and after RbfA during the maturation of 16S rRNA. It has affinity for free ribosomal 30S subunits but not for 70S ribosomes. The polypeptide is Ribosome maturation factor RimM (Clostridium beijerinckii (strain ATCC 51743 / NCIMB 8052) (Clostridium acetobutylicum)).